Consider the following 273-residue polypeptide: Light-independent protochlorophyllide reductase iron-sulfur ATP-binding protein (273 aa).

ATP is bound by residues 12–17 (GIGKST) and Lys41. Ser16 is a Mg(2+) binding site. Residues Cys97 and Cys131 each contribute to the [4Fe-4S] cluster site. 182 to 183 (NR) is an ATP binding site.

It belongs to the NifH/BchL/ChlL family. In terms of assembly, homodimer. Protochlorophyllide reductase is composed of three subunits; BchL, BchN and BchB. It depends on [4Fe-4S] cluster as a cofactor.

It catalyses the reaction chlorophyllide a + oxidized 2[4Fe-4S]-[ferredoxin] + 2 ADP + 2 phosphate = protochlorophyllide a + reduced 2[4Fe-4S]-[ferredoxin] + 2 ATP + 2 H2O. Its pathway is porphyrin-containing compound metabolism; bacteriochlorophyll biosynthesis (light-independent). In terms of biological role, component of the dark-operative protochlorophyllide reductase (DPOR) that uses Mg-ATP and reduced ferredoxin to reduce ring D of protochlorophyllide (Pchlide) to form chlorophyllide a (Chlide). This reaction is light-independent. The L component serves as a unique electron donor to the NB-component of the complex, and binds Mg-ATP. The sequence is that of Light-independent protochlorophyllide reductase iron-sulfur ATP-binding protein from Chloroflexus aggregans (strain MD-66 / DSM 9485).